A 333-amino-acid polypeptide reads, in one-letter code: Taste receptor type 2 member 38 (333 aa).

Residues 1–17 (MLTLTRIRTVSYEVRST) lie on the Extracellular side of the membrane. Residues 18–38 (FLFISVLEFAVGFLTNAFVFL) traverse the membrane as a helical segment. Topologically, residues 39–55 (VNFWDVVKRQPLSNSDC) are cytoplasmic. Residues 56-76 (VLLCLSISRLFLHGLLFLSAI) traverse the membrane as a helical segment. Residues 77–94 (QLTHFQKLSEPLNHSYQA) are Extracellular-facing. Residues 95 to 115 (IIMLWMIANQANLWLAACLSL) form a helical membrane-spanning segment. The Cytoplasmic portion of the chain corresponds to 116-142 (LYCSKLIRFSHTFLICLASWVSRKISQ). The helical transmembrane segment at 143–163 (MLLGIILCSCICTVLCVWCFF) threads the bilayer. Residues 164–190 (SRPHFTVTTVLFMNNNTRLNWQIKDLN) are Extracellular-facing. N-linked (GlcNAc...) asparagine glycosylation occurs at N178. Residues 191-211 (LFYSFLFCYLWSVPPFLLFLV) traverse the membrane as a helical segment. At 212 to 251 (SSGMLTVSLGRHMRTMKVYIRDSRDPSLEAHIKALKSLVS) the chain is on the cytoplasmic side. The helical transmembrane segment at 252–272 (FFCFFVISSCAAFISVPLLIL) threads the bilayer. At 273 to 276 (WRDK) the chain is on the extracellular side. A helical membrane pass occupies residues 277-297 (IGVMVCVGIMAACPSGHAAVL). At 298–333 (ISGNAKLRRAVTTILLWAQSSLKVRADHKADSRTPC) the chain is on the cytoplasmic side.

This sequence belongs to the G-protein coupled receptor T2R family.

The protein resides in the membrane. Its function is as follows. Receptor that may play a role in the perception of bitterness and is gustducin-linked. May play a role in sensing the chemical composition of the gastrointestinal content. The activity of this receptor may stimulate alpha gustducin, mediate PLC-beta-2 activation and lead to the gating of TRPM5. The protein is Taste receptor type 2 member 38 (TAS2R38) of Gorilla gorilla gorilla (Western lowland gorilla).